A 633-amino-acid polypeptide reads, in one-letter code: Probable extracellular metalloproteinase 5 (633 aa).

An N-terminal signal peptide occupies residues 1 to 20; sequence MHGLLLAAAGLLSLPLHVLA. The propeptide occupies 21 to 244; it reads HPQPSTNLAG…VHNVVDYVSH (224 aa). N285 carries N-linked (GlcNAc...) asparagine glycosylation. Residue H428 coordinates Zn(2+). E429 is an active-site residue. H432 lines the Zn(2+) pocket. N-linked (GlcNAc...) asparagine glycosylation is found at N592 and N621.

It belongs to the peptidase M36 family. Zn(2+) is required as a cofactor.

The protein resides in the secreted. Functionally, secreted metalloproteinase probably acting as a virulence factor. This Arthroderma benhamiae (strain ATCC MYA-4681 / CBS 112371) (Trichophyton mentagrophytes) protein is Probable extracellular metalloproteinase 5 (MEP5).